The chain runs to 348 residues: S-adenosylmethionine:tRNA ribosyltransferase-isomerase (348 aa).

This sequence belongs to the QueA family. In terms of assembly, monomer.

Its subcellular location is the cytoplasm. The catalysed reaction is 7-aminomethyl-7-carbaguanosine(34) in tRNA + S-adenosyl-L-methionine = epoxyqueuosine(34) in tRNA + adenine + L-methionine + 2 H(+). The protein operates within tRNA modification; tRNA-queuosine biosynthesis. Transfers and isomerizes the ribose moiety from AdoMet to the 7-aminomethyl group of 7-deazaguanine (preQ1-tRNA) to give epoxyqueuosine (oQ-tRNA). This is S-adenosylmethionine:tRNA ribosyltransferase-isomerase from Polynucleobacter necessarius subsp. necessarius (strain STIR1).